We begin with the raw amino-acid sequence, 102 residues long: Small ribosomal subunit protein uS10 (102 aa).

Belongs to the universal ribosomal protein uS10 family. Part of the 30S ribosomal subunit.

Functionally, involved in the binding of tRNA to the ribosomes. The protein is Small ribosomal subunit protein uS10 of Shouchella clausii (strain KSM-K16) (Alkalihalobacillus clausii).